Consider the following 366-residue polypeptide: Chorismate synthase (366 aa).

Residues Arg-48 and Arg-54 each coordinate NADP(+). FMN is bound by residues 125 to 127, 242 to 243, Gly-287, 302 to 306, and Arg-328; these read RSS, NA, and KPTSS.

The protein belongs to the chorismate synthase family. Homotetramer. The cofactor is FMNH2.

The enzyme catalyses 5-O-(1-carboxyvinyl)-3-phosphoshikimate = chorismate + phosphate. The protein operates within metabolic intermediate biosynthesis; chorismate biosynthesis; chorismate from D-erythrose 4-phosphate and phosphoenolpyruvate: step 7/7. Its function is as follows. Catalyzes the anti-1,4-elimination of the C-3 phosphate and the C-6 proR hydrogen from 5-enolpyruvylshikimate-3-phosphate (EPSP) to yield chorismate, which is the branch point compound that serves as the starting substrate for the three terminal pathways of aromatic amino acid biosynthesis. This reaction introduces a second double bond into the aromatic ring system. This is Chorismate synthase from Rhodospirillum rubrum (strain ATCC 11170 / ATH 1.1.1 / DSM 467 / LMG 4362 / NCIMB 8255 / S1).